The chain runs to 111 residues: Cell cycle protein GpsB (111 aa).

A coiled-coil region spans residues 34–72; the sequence is LDMIIKDYEVFHKELEQLQQQNARLKRELEEQKLAAAQA.

Belongs to the GpsB family. Forms polymers through the coiled coil domains. Interacts with PBP1, MreC and EzrA.

Its subcellular location is the cytoplasm. Its function is as follows. Divisome component that associates with the complex late in its assembly, after the Z-ring is formed, and is dependent on DivIC and PBP2B for its recruitment to the divisome. Together with EzrA, is a key component of the system that regulates PBP1 localization during cell cycle progression. Its main role could be the removal of PBP1 from the cell pole after pole maturation is completed. Also contributes to the recruitment of PBP1 to the division complex. Not essential for septum formation. The polypeptide is Cell cycle protein GpsB (Bacillus cytotoxicus (strain DSM 22905 / CIP 110041 / 391-98 / NVH 391-98)).